The following is a 399-amino-acid chain: UDP-N-acetylglucosamine--N-acetylmuramyl-(pentapeptide) pyrophosphoryl-undecaprenol N-acetylglucosamine transferase (399 aa).

Residues 29–31 (TAG), N148, R185, S219, and Q318 contribute to the UDP-N-acetyl-alpha-D-glucosamine site.

It belongs to the glycosyltransferase 28 family. MurG subfamily.

Its subcellular location is the cell membrane. It carries out the reaction di-trans,octa-cis-undecaprenyl diphospho-N-acetyl-alpha-D-muramoyl-L-alanyl-D-glutamyl-meso-2,6-diaminopimeloyl-D-alanyl-D-alanine + UDP-N-acetyl-alpha-D-glucosamine = di-trans,octa-cis-undecaprenyl diphospho-[N-acetyl-alpha-D-glucosaminyl-(1-&gt;4)]-N-acetyl-alpha-D-muramoyl-L-alanyl-D-glutamyl-meso-2,6-diaminopimeloyl-D-alanyl-D-alanine + UDP + H(+). It functions in the pathway cell wall biogenesis; peptidoglycan biosynthesis. Functionally, cell wall formation. Catalyzes the transfer of a GlcNAc subunit on undecaprenyl-pyrophosphoryl-MurNAc-pentapeptide (lipid intermediate I) to form undecaprenyl-pyrophosphoryl-MurNAc-(pentapeptide)GlcNAc (lipid intermediate II). This is UDP-N-acetylglucosamine--N-acetylmuramyl-(pentapeptide) pyrophosphoryl-undecaprenol N-acetylglucosamine transferase from Mycobacterium ulcerans (strain Agy99).